The primary structure comprises 272 residues: Orotidine 5'-phosphate decarboxylase (272 aa).

K93 serves as the catalytic Proton donor.

The protein belongs to the OMP decarboxylase family. Type 2 subfamily.

It catalyses the reaction orotidine 5'-phosphate + H(+) = UMP + CO2. It functions in the pathway pyrimidine metabolism; UMP biosynthesis via de novo pathway; UMP from orotate: step 2/2. This is Orotidine 5'-phosphate decarboxylase from Roseiflexus sp. (strain RS-1).